Reading from the N-terminus, the 189-residue chain is Large ribosomal subunit protein bL17 (189 aa).

Positions 126-189 are disordered; it reads DRARRVKASQ…DADADEAPQN (64 aa). Residues 139–180 show a composition bias toward low complexity; the sequence is QDAPSEPQAAEEPAAEEAVAATEAVAAPADAEATDAEAGSAD.

The protein belongs to the bacterial ribosomal protein bL17 family. In terms of assembly, part of the 50S ribosomal subunit. Contacts protein L32.

This Mycobacterium marinum (strain ATCC BAA-535 / M) protein is Large ribosomal subunit protein bL17.